The chain runs to 1032 residues: Protein transport protein Sec24D (1032 aa).

Residues 1–260 form a disordered region; the sequence is MSQQGYVATP…GPPQPQKKLD (260 aa). Residues 102 to 133 are compositionally biased toward polar residues; the sequence is PSAQSSYPGPISTSSVTQLGSQLSAMQINSYG. Positions 198-212 are enriched in pro residues; it reads GPPPPNAQYQPPPLP. Ser266 carries the phosphoserine modification. Zn(2+) contacts are provided by Cys363, Cys366, Cys385, and Cys388. The zinc finger-like stretch occupies residues 363-388; sequence CNRCKAYMCPFMQFIEGGRRYQCGFC. The stretch at 901 to 974 is one Gelsolin-like repeat; sequence MLPAAVRCSE…PYSQQLRMIM (74 aa).

It belongs to the SEC23/SEC24 family. SEC24 subfamily. COPII is composed of at least five proteins: the Sec23/24 complex, the Sec13/31 complex and Sar1. Interacts with TMED2 and TMED10. Interacts with CNIH4. Interacts with GOSR2 (via IxM motif) and STX5 (via IxM motif); recruits GOSR2 and STX5 into COPII-coated vesicles. Interacts with KCNA3; this interaction is reduced in the presence of KCNE4. Ubiquitously expressed, with higher amounts in placenta, pancreas, heart and liver.

It localises to the cytoplasmic vesicle. The protein resides in the COPII-coated vesicle membrane. It is found in the endoplasmic reticulum membrane. The protein localises to the cytoplasm. Its subcellular location is the cytosol. Component of the coat protein complex II (COPII) which promotes the formation of transport vesicles from the endoplasmic reticulum (ER). The coat has two main functions, the physical deformation of the endoplasmic reticulum membrane into vesicles and the selection of cargo molecules for their transport to the Golgi complex. Plays a central role in cargo selection within the COPII complex and together with SEC24C may have a different specificity compared to SEC24A and SEC24B. May more specifically package GPI-anchored proteins through the cargo receptor TMED10. May also be specific for IxM motif-containing cargos like the SNAREs GOSR2 and STX5. The chain is Protein transport protein Sec24D from Homo sapiens (Human).